The primary structure comprises 137 residues: Phosphoribosyl-AMP cyclohydrolase (137 aa).

Residue Asp84 participates in Mg(2+) binding. Cys85 serves as a coordination point for Zn(2+). Asp86 and Asp88 together coordinate Mg(2+). Positions 101 and 108 each coordinate Zn(2+).

This sequence belongs to the PRA-CH family. In terms of assembly, homodimer. The cofactor is Mg(2+). It depends on Zn(2+) as a cofactor.

The protein resides in the cytoplasm. The catalysed reaction is 1-(5-phospho-beta-D-ribosyl)-5'-AMP + H2O = 1-(5-phospho-beta-D-ribosyl)-5-[(5-phospho-beta-D-ribosylamino)methylideneamino]imidazole-4-carboxamide. It participates in amino-acid biosynthesis; L-histidine biosynthesis; L-histidine from 5-phospho-alpha-D-ribose 1-diphosphate: step 3/9. Its function is as follows. Catalyzes the hydrolysis of the adenine ring of phosphoribosyl-AMP. The chain is Phosphoribosyl-AMP cyclohydrolase from Pelodictyon phaeoclathratiforme (strain DSM 5477 / BU-1).